The primary structure comprises 374 residues: Chaperone protein DnaJ (374 aa).

Residues Asp-5–Gly-70 form the J domain. The segment at Gly-131–Tyr-209 adopts a CR-type zinc-finger fold. Cys-144, Cys-147, Cys-161, Cys-164, Cys-183, Cys-186, Cys-197, and Cys-200 together coordinate Zn(2+). CXXCXGXG motif repeat units lie at residues Cys-144–Gly-151, Cys-161–Gly-168, Cys-183–Gly-190, and Cys-197–Gly-204.

This sequence belongs to the DnaJ family. Homodimer. Zn(2+) serves as cofactor.

The protein localises to the cytoplasm. In terms of biological role, participates actively in the response to hyperosmotic and heat shock by preventing the aggregation of stress-denatured proteins and by disaggregating proteins, also in an autonomous, DnaK-independent fashion. Unfolded proteins bind initially to DnaJ; upon interaction with the DnaJ-bound protein, DnaK hydrolyzes its bound ATP, resulting in the formation of a stable complex. GrpE releases ADP from DnaK; ATP binding to DnaK triggers the release of the substrate protein, thus completing the reaction cycle. Several rounds of ATP-dependent interactions between DnaJ, DnaK and GrpE are required for fully efficient folding. Also involved, together with DnaK and GrpE, in the DNA replication of plasmids through activation of initiation proteins. The polypeptide is Chaperone protein DnaJ (Marinomonas sp. (strain MWYL1)).